The following is a 662-amino-acid chain: A-kinase anchor protein 10, mitochondrial (662 aa).

The transit peptide at 1–28 (MRGAGPSPRHSPRALRPDPGPAMSFFRR) directs the protein to the mitochondrion. Disordered stretches follow at residues 1–55 (MRGA…SPQK), 178–205 (KQSS…ALDR), and 242–280 (GHSA…NSCS). A compositionally biased stretch (basic and acidic residues) spans 32-43 (GKEQEKTLDVKS). 2 positions are modified to phosphoserine: Ser-52 and Ser-189. RGS domains lie at 125 to 369 (TLEQ…CKYQ) and 379 to 505 (YLAD…YKYL). Positions 256 to 280 (GSHQIPTDSQDSSSRLAVGSRNSCS) are enriched in polar residues. Position 281 is a phosphoserine (Ser-281). Residues 634–647 (LAWKIAKMIVSDVM) are PKA-RII subunit binding.

In terms of tissue distribution, highly expressed in testis, kidney and lung, followed by brain, skeletal muscle, liver, spleen and heart. Also expressed in brown adipose tissue and pancreas.

The protein resides in the mitochondrion. Its subcellular location is the membrane. The protein localises to the cytoplasm. Its function is as follows. Differentially targeted protein that binds to type I and II regulatory subunits of protein kinase A and anchors them to the mitochondria or the plasma membrane. Although the physiological relevance between PKA and AKAPS with mitochondria is not fully understood, one idea is that BAD, a proapoptotic member, is phosphorylated and inactivated by mitochondria-anchored PKA. It cannot be excluded too that it may facilitate PKA as well as G protein signal transduction, by acting as an adapter for assembling multiprotein complexes. With its RGS domain, it could lead to the interaction to G-alpha proteins, providing a link between the signaling machinery and the downstream kinase. The protein is A-kinase anchor protein 10, mitochondrial (Akap10) of Mus musculus (Mouse).